Reading from the N-terminus, the 375-residue chain is Succinyl-diaminopimelate desuccinylase (375 aa).

A Zn(2+)-binding site is contributed by His-66. Residue Asp-68 is part of the active site. Asp-99 is a binding site for Zn(2+). The active-site Proton acceptor is the Glu-133. Zn(2+) contacts are provided by Glu-134, Glu-162, and His-348.

It belongs to the peptidase M20A family. DapE subfamily. As to quaternary structure, homodimer. The cofactor is Zn(2+). Requires Co(2+) as cofactor.

It catalyses the reaction N-succinyl-(2S,6S)-2,6-diaminopimelate + H2O = (2S,6S)-2,6-diaminopimelate + succinate. Its pathway is amino-acid biosynthesis; L-lysine biosynthesis via DAP pathway; LL-2,6-diaminopimelate from (S)-tetrahydrodipicolinate (succinylase route): step 3/3. Catalyzes the hydrolysis of N-succinyl-L,L-diaminopimelic acid (SDAP), forming succinate and LL-2,6-diaminopimelate (DAP), an intermediate involved in the bacterial biosynthesis of lysine and meso-diaminopimelic acid, an essential component of bacterial cell walls. This Citrobacter koseri (strain ATCC BAA-895 / CDC 4225-83 / SGSC4696) protein is Succinyl-diaminopimelate desuccinylase.